The following is a 709-amino-acid chain: ATP-binding cassette sub-family F member 3 (709 aa).

A2 is subject to N-acetylalanine. The segment covering 129–143 has biased composition (basic and acidic residues); it reads RLKAKQEKRSEKETL. Residues 129-171 form a disordered region; the sequence is RLKAKQEKRSEKETLKTSSPLVLEEASASQAGSRKESRLESSG. Phosphoserine is present on residues S155, S157, and S161. Residues 161–171 show a composition bias toward basic and acidic residues; sequence SRKESRLESSG. ABC transporter domains lie at 178 to 424 and 492 to 707; these read VRIE…LNQQ and LQLD…RREG. 210-217 lines the ATP pocket; that stretch reads GRNGLGKT. S283 carries the post-translational modification Phosphoserine. 525–532 serves as a coordination point for ATP; the sequence is GENGAGKS.

This sequence belongs to the ABC transporter superfamily. ABCF family. EF3 subfamily.

Its function is as follows. Displays an antiviral effect against flaviviruses such as west Nile virus (WNV) in the presence of OAS1B. This Rattus norvegicus (Rat) protein is ATP-binding cassette sub-family F member 3 (Abcf3).